The sequence spans 490 residues: 5'-3' exonuclease PLD3 (490 aa).

The Cytoplasmic segment spans residues 1–38 (MKPKLMYQELKVPAEEPANELPMNEIEAWKAAEKKARW). The helical; Signal-anchor for type II membrane protein transmembrane segment at 39-59 (VLLVLILAVVGFGALMTQLFL) threads the bilayer. The Lumenal segment spans residues 60–490 (WEYGDLHLFG…DSVGNACRLL (431 aa)). 2 disulfides stabilise this stretch: Cys77-Cys239 and Cys81-Cys237. 2 N-linked (GlcNAc...) asparagine glycosylation sites follow: Asn97 and Asn132. One can recognise a PLD phosphodiesterase 1 domain in the interval 196 to 223 (THGVLHTKFWVVDQTHFYLGSANMDWRS). Catalysis depends on residues His201, Lys203, and Asp208. His201 (proton donor) is an active-site residue. Residues His201 and Lys203 each coordinate phosphate. A phosphate-binding site is contributed by Asn218. N-linked (GlcNAc...) asparagine glycans are attached at residues Asn236, Asn284, and Asn387. Residues Cys366 and Cys487 are joined by a disulfide bond. The PLD phosphodiesterase 2 domain maps to 411–437 (YARVNHNKYMVTERATYIGTSNWSGNY). His416 provides a ligand contact to phosphate. Catalysis depends on His416, which acts as the Nucleophile. Phe438 lines the Mg(2+) pocket.

Belongs to the phospholipase D family. In terms of assembly, homodimer. Interacts with APP. In terms of processing, N-glycosylated. Post-translationally, proteolytically processed to a soluble form that is stable within endosomes and lysosomes. During transport through the secretory pathway becomes proteolysed by cysteine proteases, thereby releasing a stable soluble lysosomal lumenal polypeptide, whereas the transmembrane-bound fragment is rapidly degraded. Its transport route to lysosomes involves ubiquitination and the ESCRT complex. Ubiquitinated. Ubiquitination mediates sorting into lysosomes.

It is found in the endoplasmic reticulum membrane. The protein localises to the lysosome lumen. It localises to the early endosome membrane. Its subcellular location is the late endosome membrane. The protein resides in the golgi apparatus membrane. It is found in the endosome membrane. The catalysed reaction is Exonucleolytic cleavage in the 5'- to 3'-direction to yield nucleoside 3'-phosphates.. It catalyses the reaction a 5'-end 5'-dephospho-ribonucleotidyl-ribonucleotide-RNA + H2O = a ribonucleoside 3'-phosphate + a 5'-end dephospho-ribonucleoside-RNA + H(+). It carries out the reaction a ribonucleoside 3'-phosphate-2'-3'-cyclophospho-GMP + H2O = a ribonucleoside 3'-phosphate + 2',3'-cyclophospho-GMP + H(+). The enzyme catalyses a 5'-end 5'-dephospho-2'-deoxyribonucleotidyl-2'-deoxyribonucleotide in single-stranded DNA + H2O = a 5'-end dephospho-2'-deoxyribonucleoside in single-stranded DNA + a 2'-deoxyribonucleoside 3'-phosphate + H(+). The catalysed reaction is a 5'-end 5'-phospho-2'-deoxyribonucleotide in single-stranded DNA + H2O = a 5'-end 5'-dephospho-2'-deoxyribonucleotide in single-stranded DNA + phosphate. It catalyses the reaction a 3-lyso-sn-glycero-1-phospho-(3'-acyl-1'-sn-glycerol) + a 1-acyl-sn-glycerol = a 3-acyl-sn-glycero-1-phospho-(3'-acyl-1'-sn-glycerol) + glycerol. It carries out the reaction 3-lyso-sn-glycero-1-phospho-(3'-(9Z-octadecenoyl)-1'-sn-glycerol) + 1-(9Z-octadecenoyl)-sn-glycerol = 3-(9Z-octadecenoyl)-sn-glycero-1-phospho-(3'-(9Z-octadecenoyl)-1'-sn-glycerol) + glycerol. 5'-&gt;3' exonuclease that hydrolyzes the phosphodiester bond of single-stranded DNA (ssDNA) and RNA molecules to form nucleoside 3'-monophosphates and 5'-end 5'-hydroxy deoxyribonucleotide/ribonucleotide fragments. Partially redundant with PLD4, can cleave all four nucleotides displaying higher efficiency for ssDNA and RNA fragments initiated with uridine and guanosine residues and lower efficiency for cytidine-initiated substrates. As a result, it does not always degrade polynucleotides to the single nucleotide level, it can stall at specific sites sparing certain fragments from exonucleolytic degradation. Processes self and pathogenic ssDNA and RNA molecules that reach the endolysosomal compartment via phagocytosis or autophagy and may serve as 'danger' signals for recognition by innate immune receptors such as toll-like receptors (TLRs). Degrades mitochondrial CpG-rich ssDNA fragments to prevent TLR9 activation and autoinflammatory response, but it can cleave viral RNA to generate ligands for TLR7 activation and initiate antiviral immune responses. In plasmacytoid dendritic cells, it cooperates with endonuclease RNASET2 to release 2',3'-cyclic guanosine monophosphate (2',3'-cGMP), a potent stimulatory ligand for TLR7. Produces 2',3'-cGMPs and cytidine-rich RNA fragments that occupy TLR7 ligand-binding pockets and trigger a signaling-competent state. Can exert polynucleotide phosphatase activity toward 5'-phosphorylated ssDNA substrates although at a slow rate. Transphosphatidylase that catalyzes the exchange with R to S stereo-inversion of the glycerol moiety between (S,R)-lysophosphatidylglycerol (LPG) and monoacylglycerol (MAG) substrates to yield (S,S)-bis(monoacylglycero)phosphate (BMP). Can synthesize a variety of (S,S)-BMPs representing the main phospholipid constituent of lysosomal intralumenal vesicle (ILV) membranes that bind acid hydrolases for lipid degradation. Regulates the homeostasis and interorganellar communication of the endolysosomal system with an overall impact on cellular removal of dysfunctional organelles via autophagy as well as proper protein and lipid turnover. May play a role in myotube formation in response to ER stress. This chain is 5'-3' exonuclease PLD3 (PLD3), found in Macaca fascicularis (Crab-eating macaque).